Reading from the N-terminus, the 276-residue chain is Glyoxal reductase (276 aa).

The active-site Proton donor is the Tyr-54. His-112 contributes to the substrate binding site. 190–242 (SPLMQGQLLDNEVLTQIAEKHNKSVAQVILRWDLQHGVVTIPKSIKEHRIIEN) is an NADP(+) binding site.

Belongs to the aldo/keto reductase family.

It catalyses the reaction (S)-lactaldehyde + NADP(+) = methylglyoxal + NADPH + H(+). Functionally, reduces glyoxal and methylglyoxal (2-oxopropanal). Is not involved in the vitamin B6 biosynthesis. This chain is Glyoxal reductase (yvgN), found in Bacillus subtilis (strain 168).